A 230-amino-acid polypeptide reads, in one-letter code: Potassium/proton antiporter CemA (230 aa).

4 helical membrane-spanning segments follow: residues 7–27 (LPSF…SFSF), 106–126 (IILH…SFFL), 145–165 (LNDS…VGFH), and 181–201 (LGWA…PVIL).

The protein belongs to the CemA family.

It localises to the plastid. The protein resides in the chloroplast inner membrane. It catalyses the reaction K(+)(in) + H(+)(out) = K(+)(out) + H(+)(in). In terms of biological role, contributes to K(+)/H(+) antiport activity by supporting proton efflux to control proton extrusion and homeostasis in chloroplasts in a light-dependent manner to modulate photosynthesis. Prevents excessive induction of non-photochemical quenching (NPQ) under continuous-light conditions. Indirectly promotes efficient inorganic carbon uptake into chloroplasts. The polypeptide is Potassium/proton antiporter CemA (Zea mays (Maize)).